The primary structure comprises 355 residues: Probable dual-specificity RNA methyltransferase RlmN (355 aa).

Glu89 (proton acceptor) is an active-site residue. One can recognise a Radical SAM core domain in the interval 95-322 (YENRKTVCLS…KRLGVPTSIR (228 aa)). A disulfide bridge connects residues Cys102 and Cys333. [4Fe-4S] cluster-binding residues include Cys109, Cys113, and Cys116. S-adenosyl-L-methionine is bound by residues 159–160 (GE), Ser191, 214–216 (SLH), and Asn290. Cys333 acts as the S-methylcysteine intermediate in catalysis.

This sequence belongs to the radical SAM superfamily. RlmN family. [4Fe-4S] cluster serves as cofactor.

It localises to the cytoplasm. The catalysed reaction is adenosine(2503) in 23S rRNA + 2 reduced [2Fe-2S]-[ferredoxin] + 2 S-adenosyl-L-methionine = 2-methyladenosine(2503) in 23S rRNA + 5'-deoxyadenosine + L-methionine + 2 oxidized [2Fe-2S]-[ferredoxin] + S-adenosyl-L-homocysteine. It carries out the reaction adenosine(37) in tRNA + 2 reduced [2Fe-2S]-[ferredoxin] + 2 S-adenosyl-L-methionine = 2-methyladenosine(37) in tRNA + 5'-deoxyadenosine + L-methionine + 2 oxidized [2Fe-2S]-[ferredoxin] + S-adenosyl-L-homocysteine. In terms of biological role, specifically methylates position 2 of adenine 2503 in 23S rRNA and position 2 of adenine 37 in tRNAs. In Thermus thermophilus (strain ATCC 27634 / DSM 579 / HB8), this protein is Probable dual-specificity RNA methyltransferase RlmN.